A 507-amino-acid polypeptide reads, in one-letter code: Glycerol kinase (507 aa).

Thr-15 provides a ligand contact to ADP. Residues Thr-15, Thr-16, and Ser-17 each coordinate ATP. Position 15 (Thr-15) interacts with sn-glycerol 3-phosphate. ADP is bound at residue Arg-19. Residues Arg-85, Glu-86, Tyr-137, and Asp-250 each contribute to the sn-glycerol 3-phosphate site. Arg-85, Glu-86, Tyr-137, Asp-250, and Gln-251 together coordinate glycerol. The ADP site is built by Thr-272 and Gly-316. Positions 272, 316, 320, and 417 each coordinate ATP. Position 417 (Gly-417) interacts with ADP.

It belongs to the FGGY kinase family.

It carries out the reaction glycerol + ATP = sn-glycerol 3-phosphate + ADP + H(+). It functions in the pathway polyol metabolism; glycerol degradation via glycerol kinase pathway; sn-glycerol 3-phosphate from glycerol: step 1/1. Inhibited by fructose 1,6-bisphosphate (FBP). Key enzyme in the regulation of glycerol uptake and metabolism. Catalyzes the phosphorylation of glycerol to yield sn-glycerol 3-phosphate. The polypeptide is Glycerol kinase (Mycoplasmopsis pulmonis (strain UAB CTIP) (Mycoplasma pulmonis)).